Here is a 291-residue protein sequence, read N- to C-terminus: N-acetylmannosamine kinase (291 aa).

ATP contacts are provided by residues Ala-5–Lys-12 and Gly-132–Cys-139. 4 residues coordinate Zn(2+): His-156, Cys-166, Cys-168, and Cys-173.

Belongs to the ROK (NagC/XylR) family. NanK subfamily. As to quaternary structure, homodimer.

The catalysed reaction is an N-acyl-D-mannosamine + ATP = an N-acyl-D-mannosamine 6-phosphate + ADP + H(+). The protein operates within amino-sugar metabolism; N-acetylneuraminate degradation; D-fructose 6-phosphate from N-acetylneuraminate: step 2/5. Functionally, catalyzes the phosphorylation of N-acetylmannosamine (ManNAc) to ManNAc-6-P. The polypeptide is N-acetylmannosamine kinase (Salmonella paratyphi B (strain ATCC BAA-1250 / SPB7)).